A 574-amino-acid chain; its full sequence is Serine/threonine-protein kinase B (574 aa).

The region spanning 34 to 301 (YQTLGLLGKG…VLDALEMPTY (268 aa)) is the Protein kinase domain. ATP contacts are provided by residues 40–48 (LGKGGFGAT) and Lys65. Catalysis depends on Asp163, which acts as the Proton acceptor. A disordered region spans residues 319 to 407 (GAGDEPATGI…GGSVGAGGID (89 aa)). Residues 343-364 (TRFNTNVQPRDPSSTSLNTGIK) show a composition bias toward polar residues. 2 consecutive Pentapeptide repeat domains span residues 454–493 (QNLVGIVLAKAFVPGINCYQANLTNANFEQAELTRADFGK) and 504–543 (ANLSDAYFGYADLRGADLRGANLNGVNFKYANLQGANFSG).

Belongs to the protein kinase superfamily. Ser/Thr protein kinase family. Autophosphorylated.

It catalyses the reaction L-seryl-[protein] + ATP = O-phospho-L-seryl-[protein] + ADP + H(+). The catalysed reaction is L-threonyl-[protein] + ATP = O-phospho-L-threonyl-[protein] + ADP + H(+). Functionally, protein kinase required for cell motility, but not for phototaxis. This is Serine/threonine-protein kinase B (spkB) from Synechocystis sp. (strain ATCC 27184 / PCC 6803 / Kazusa).